A 131-amino-acid chain; its full sequence is Transcription antitermination protein NusB (131 aa).

Belongs to the NusB family.

In terms of biological role, involved in transcription antitermination. Required for transcription of ribosomal RNA (rRNA) genes. Binds specifically to the boxA antiterminator sequence of the ribosomal RNA (rrn) operons. This is Transcription antitermination protein NusB from Campylobacter hominis (strain ATCC BAA-381 / DSM 21671 / CCUG 45161 / LMG 19568 / NCTC 13146 / CH001A).